Reading from the N-terminus, the 105-residue chain is Thioredoxin (105 aa).

A Thioredoxin domain is found at 2–105 (VKLIESKEAF…KLEATITEFA (104 aa)). N6-acetyllysine is present on lysine 3. At lysine 8 the chain carries N6-succinyllysine. Active-site nucleophile residues include cysteine 32 and cysteine 35. Cysteines 32 and 35 form a disulfide. N6-acetyllysine is present on lysine 39. S-nitrosocysteine occurs at positions 62 and 69. The residue at position 73 (cysteine 73) is an S-nitrosocysteine; alternate. The residue at position 94 (lysine 94) is an N6-acetyllysine; alternate. N6-succinyllysine; alternate is present on lysine 94.

This sequence belongs to the thioredoxin family. In terms of assembly, homodimer; disulfide-linked. Interacts with TXNIP through the redox-active site. Interacts with MAP3K5 and CASP3. Interacts with APEX1; the interaction stimulates the FOS/JUN AP-1 DNA-binding activity in a redox-dependent manner. In the fully reduced protein, both Cys-69 and Cys-73 are nitrosylated in response to nitric oxide (NO). When two disulfide bonds are present in the protein, only Cys-73 is nitrosylated. Cys-73 can serve as donor for nitrosylation of target proteins.

The protein localises to the nucleus. It localises to the cytoplasm. The protein resides in the secreted. In terms of biological role, participates in various redox reactions through the reversible oxidation of its active center dithiol to a disulfide and catalyzes dithiol-disulfide exchange reactions. Plays a role in the reversible S-nitrosylation of cysteine residues in target proteins, and thereby contributes to the response to intracellular nitric oxide. Nitrosylates the active site Cys of CASP3 in response to nitric oxide (NO), and thereby inhibits caspase-3 activity. Induces the FOS/JUN AP-1 DNA binding activity in ionizing radiation (IR) cells through its oxidation/reduction status and stimulates AP-1 transcriptional activity. The sequence is that of Thioredoxin (Txn) from Rattus norvegicus (Rat).